The primary structure comprises 214 residues: Pyridoxine/pyridoxamine 5'-phosphate oxidase (214 aa).

Residues arginine 9–tyrosine 12 and lysine 67 contribute to the substrate site. Residues arginine 62 to lysine 67, phenylalanine 77 to threonine 78, lysine 84, and glutamine 106 each bind FMN. Positions 124, 128, and 132 each coordinate substrate. Residues glutamine 141–serine 142 and tryptophan 186 each bind FMN. Arginine 192–histidine 194 is a binding site for substrate. Arginine 196 is an FMN binding site.

Belongs to the pyridoxamine 5'-phosphate oxidase family. In terms of assembly, homodimer. The cofactor is FMN.

It carries out the reaction pyridoxamine 5'-phosphate + O2 + H2O = pyridoxal 5'-phosphate + H2O2 + NH4(+). It catalyses the reaction pyridoxine 5'-phosphate + O2 = pyridoxal 5'-phosphate + H2O2. It participates in cofactor metabolism; pyridoxal 5'-phosphate salvage; pyridoxal 5'-phosphate from pyridoxamine 5'-phosphate: step 1/1. It functions in the pathway cofactor metabolism; pyridoxal 5'-phosphate salvage; pyridoxal 5'-phosphate from pyridoxine 5'-phosphate: step 1/1. In terms of biological role, catalyzes the oxidation of either pyridoxine 5'-phosphate (PNP) or pyridoxamine 5'-phosphate (PMP) into pyridoxal 5'-phosphate (PLP). The chain is Pyridoxine/pyridoxamine 5'-phosphate oxidase from Microcystis aeruginosa (strain NIES-843 / IAM M-2473).